The primary structure comprises 317 residues: uncharacterized protein (317 aa).

Residues 1-13 (MKRVTGVFLTLLR) lie on the Cytoplasmic side of the membrane. A helical membrane pass occupies residues 14-34 (FSQFASSVLVMSLLAYAIHAY). Over 35-49 (GNRGNKKTNFTLATG) the chain is Extracellular. Asn-43 is a glycosylation site (N-linked (GlcNAc...) asparagine). The helical transmembrane segment at 50-70 (VISVFYLIALGILCLALPTLI) threads the bilayer. A topological domain (cytoplasmic) is located at residue Tyr-71. The chain crosses the membrane as a helical span at residues 72 to 92 (IGMYFCAELIVCMLWLAAFVV). Over 93–133 (LAKAQGERSCSNTNADGLYYNPYSGQYTADSHRRACNSSQA) the chain is Extracellular. Residue Asn-129 is glycosylated (N-linked (GlcNAc...) asparagine). A helical membrane pass occupies residues 134–154 (AIAFSGLCFVLFLISVILLGI). Residues 155 to 317 (NVLTPIRKRY…EPNRNVNQMP (163 aa)) lie on the Cytoplasmic side of the membrane. Residues 204–317 (RTGDVEAGAG…EPNRNVNQMP (114 aa)) are disordered. Positions 239–250 (TTTTNTRYTTTT) are enriched in low complexity. The span at 256-282 (RYTTNDRNPGSANVANSAVDQHAYSTD) shows a compositional bias: polar residues. The segment covering 284–295 (SGDRSYQEKVTE) has biased composition (basic and acidic residues). A compositionally biased stretch (polar residues) spans 302-317 (MSGSTAEPNRNVNQMP).

Its subcellular location is the membrane. This is an uncharacterized protein from Saccharomyces cerevisiae (strain ATCC 204508 / S288c) (Baker's yeast).